We begin with the raw amino-acid sequence, 208 residues long: Uridine kinase (208 aa).

12 to 19 (GGSGGGKT) is a binding site for ATP.

It belongs to the uridine kinase family.

It is found in the cytoplasm. It carries out the reaction uridine + ATP = UMP + ADP + H(+). The catalysed reaction is cytidine + ATP = CMP + ADP + H(+). It participates in pyrimidine metabolism; CTP biosynthesis via salvage pathway; CTP from cytidine: step 1/3. The protein operates within pyrimidine metabolism; UMP biosynthesis via salvage pathway; UMP from uridine: step 1/1. The polypeptide is Uridine kinase (Streptococcus equi subsp. equi (strain 4047)).